Reading from the N-terminus, the 85-residue chain is Kunitz-type serine protease inhibitor homolog beta-bungarotoxin B1 chain, major component (85 aa).

A signal peptide spans 1 to 24 (MSSGGLLLLLGLLTLCAELIPVSS). One can recognise a BPTI/Kunitz inhibitor domain in the interval 31–81 (CDKPPDKGNCGPVRRAFYYDTRLKTCKAFQYRGCNGNGNHFKTETLCRCEC). Cystine bridges form between Cys31-Cys81, Cys40-Cys64, and Cys56-Cys77.

It belongs to the venom Kunitz-type family. In terms of assembly, heterodimer; disulfide-linked. The A chains have phospholipase A2 activity and the B chains show homology with the basic protease inhibitors. In terms of tissue distribution, expressed by the venom gland.

It is found in the secreted. Functionally, beta-1-bungarotoxin is a presynaptic neurotoxin of the venom. The B chain is homologous to venom basic protease inhibitors but has no protease inhibitor activity and blocks voltage-gated potassium channels (Kv). This is Kunitz-type serine protease inhibitor homolog beta-bungarotoxin B1 chain, major component from Bungarus multicinctus (Many-banded krait).